The following is a 190-amino-acid chain: Ribose 1,5-bisphosphate phosphokinase PhnN (190 aa).

Positions 135-159 (RGREPEPGIGQRLARPDPAPGHQAD) are disordered.

It belongs to the ribose 1,5-bisphosphokinase family.

The enzyme catalyses alpha-D-ribose 1,5-bisphosphate + ATP = 5-phospho-alpha-D-ribose 1-diphosphate + ADP. The protein operates within metabolic intermediate biosynthesis; 5-phospho-alpha-D-ribose 1-diphosphate biosynthesis; 5-phospho-alpha-D-ribose 1-diphosphate from D-ribose 5-phosphate (route II): step 3/3. In terms of biological role, catalyzes the phosphorylation of ribose 1,5-bisphosphate to 5-phospho-D-ribosyl alpha-1-diphosphate (PRPP). The sequence is that of Ribose 1,5-bisphosphate phosphokinase PhnN from Pseudofrankia inefficax (strain DSM 45817 / CECT 9037 / DDB 130130 / EuI1c) (Frankia inefficax).